A 439-amino-acid polypeptide reads, in one-letter code: GTPase Der (439 aa).

EngA-type G domains are found at residues 2-168 and 181-357; these read ATVL…EEKG and IKVA…ASYT. Residues 8–15, 55–59, 118–121, 187–194, 234–238, and 300–303 each bind GTP; these read GKPNVGKS, DTCGV, NKTE, GRPNVGKS, DTAGL, and NKWD. One can recognise a KH-like domain in the interval 358–439; sequence TKVPSSAINS…PIFLKFKRSR (82 aa).

The protein belongs to the TRAFAC class TrmE-Era-EngA-EngB-Septin-like GTPase superfamily. EngA (Der) GTPase family. Associates with the 50S ribosomal subunit.

In terms of biological role, GTPase that plays an essential role in the late steps of ribosome biogenesis. The protein is GTPase Der of Thermotoga petrophila (strain ATCC BAA-488 / DSM 13995 / JCM 10881 / RKU-1).